The following is a 382-amino-acid chain: Galactokinase (382 aa).

34–37 contributes to the substrate binding site; that stretch reads EHTD. 124–130 lines the ATP pocket; that stretch reads GAGLSSS. Ser-130 and Glu-162 together coordinate Mg(2+). Asp-174 functions as the Proton acceptor in the catalytic mechanism. Tyr-223 provides a ligand contact to substrate.

This sequence belongs to the GHMP kinase family. GalK subfamily.

The protein resides in the cytoplasm. It carries out the reaction alpha-D-galactose + ATP = alpha-D-galactose 1-phosphate + ADP + H(+). The protein operates within carbohydrate metabolism; galactose metabolism. Functionally, catalyzes the transfer of the gamma-phosphate of ATP to D-galactose to form alpha-D-galactose-1-phosphate (Gal-1-P). This Shigella boydii serotype 4 (strain Sb227) protein is Galactokinase.